Consider the following 399-residue polypeptide: MMAGFAQTTITKINQFYERWMPRLPAEMTARNVLVFCVVCLLCIGSVMVASASMPYAEYMHENPFHYVVRHAISIATAAIVAYLVYKVPLNVWFKNTFSFWLITILLLLAVLVIGTEVNGSRRWIRLAGFTLQPTEVAKVMMAIFTADYVVRRAKEVRTHWKGLVRLSGVMAITVGLIIAEPDLGATVVIVLMMVGIFFLAGAPPTQFAIMLGAVVMGIGFLILFEPYRLARAMSFTNPWADPLGTGYQLSNALMAFGRGEWFGTGLGHSVQKLSYLPEAHTDFMLAVLGEEFGFVGISIVIGLSFIMLACCIKIGHRALKHNFLRAGYLAYGISIIFLLQIIVNAGMNMGLMPTKGLTLPFISYGGTSLMMCAAMISLILRIDASTQEINPDREESNF.

The Cytoplasmic segment spans residues 1–32 (MMAGFAQTTITKINQFYERWMPRLPAEMTARN). The chain crosses the membrane as a helical span at residues 33–53 (VLVFCVVCLLCIGSVMVASAS). Residues 54–72 (MPYAEYMHENPFHYVVRHA) are Periplasmic-facing. Residues 73–93 (ISIATAAIVAYLVYKVPLNVW) form a helical membrane-spanning segment. Over 94–97 (FKNT) the chain is Cytoplasmic. The chain crosses the membrane as a helical span at residues 98-118 (FSFWLITILLLLAVLVIGTEV). The Periplasmic segment spans residues 119-126 (NGSRRWIR). A helical membrane pass occupies residues 127 to 147 (LAGFTLQPTEVAKVMMAIFTA). At 148–159 (DYVVRRAKEVRT) the chain is on the cytoplasmic side. Residues 160 to 180 (HWKGLVRLSGVMAITVGLIIA) traverse the membrane as a helical segment. Residues 181-183 (EPD) lie on the Periplasmic side of the membrane. The helical transmembrane segment at 184–204 (LGATVVIVLMMVGIFFLAGAP) threads the bilayer. Residues 205-207 (PTQ) lie on the Cytoplasmic side of the membrane. The chain crosses the membrane as a helical span at residues 208-228 (FAIMLGAVVMGIGFLILFEPY). The Periplasmic portion of the chain corresponds to 229 to 292 (RLARAMSFTN…DFMLAVLGEE (64 aa)). Residues 293-313 (FGFVGISIVIGLSFIMLACCI) traverse the membrane as a helical segment. Residues 314–327 (KIGHRALKHNFLRA) lie on the Cytoplasmic side of the membrane. A helical membrane pass occupies residues 328–348 (GYLAYGISIIFLLQIIVNAGM). The Periplasmic portion of the chain corresponds to 349 to 359 (NMGLMPTKGLT). Residues 360 to 380 (LPFISYGGTSLMMCAAMISLI) form a helical membrane-spanning segment. Over 381–399 (LRIDASTQEINPDREESNF) the chain is Cytoplasmic.

Belongs to the SEDS family. FtsW subfamily.

Its subcellular location is the cell inner membrane. It carries out the reaction [GlcNAc-(1-&gt;4)-Mur2Ac(oyl-L-Ala-gamma-D-Glu-L-Lys-D-Ala-D-Ala)](n)-di-trans,octa-cis-undecaprenyl diphosphate + beta-D-GlcNAc-(1-&gt;4)-Mur2Ac(oyl-L-Ala-gamma-D-Glu-L-Lys-D-Ala-D-Ala)-di-trans,octa-cis-undecaprenyl diphosphate = [GlcNAc-(1-&gt;4)-Mur2Ac(oyl-L-Ala-gamma-D-Glu-L-Lys-D-Ala-D-Ala)](n+1)-di-trans,octa-cis-undecaprenyl diphosphate + di-trans,octa-cis-undecaprenyl diphosphate + H(+). It functions in the pathway cell wall biogenesis; peptidoglycan biosynthesis. Its function is as follows. Peptidoglycan polymerase that is essential for cell division. The sequence is that of Probable peptidoglycan glycosyltransferase FtsW from Acinetobacter baylyi (strain ATCC 33305 / BD413 / ADP1).